Reading from the N-terminus, the 305-residue chain is Tyrosine recombinase XerC (305 aa).

In terms of domain architecture, Core-binding (CB) spans 1–94 (MSSVDEFLTY…ACRSYYAWLL (94 aa)). Residues 115–292 (KLPQVLDADE…DFQHLAKVYD (178 aa)) enclose the Tyr recombinase domain. Catalysis depends on residues R154, K178, H244, R247, and H270. Y279 serves as the catalytic O-(3'-phospho-DNA)-tyrosine intermediate.

This sequence belongs to the 'phage' integrase family. XerC subfamily. Forms a cyclic heterotetrameric complex composed of two molecules of XerC and two molecules of XerD.

The protein resides in the cytoplasm. Functionally, site-specific tyrosine recombinase, which acts by catalyzing the cutting and rejoining of the recombining DNA molecules. The XerC-XerD complex is essential to convert dimers of the bacterial chromosome into monomers to permit their segregation at cell division. It also contributes to the segregational stability of plasmids. The sequence is that of Tyrosine recombinase XerC from Xanthomonas axonopodis pv. citri (strain 306).